Here is a 525-residue protein sequence, read N- to C-terminus: MREIMKILIITGKLAERKVKDAVKKYDFIDVHVANISVAAFLTPNLIIKEIKKLENKLGKKLKDIYDFVLVTGLIRHDLKNVEEETGIKCFKSTREASDIPILIENLDKIKLSTKEYADLQLLEIIRKKCEEEIKKAEEQELGEGDIKIGKLKVGDKFPMRVLGEIVHAPWLKEKELEEKIIYYLESGADMIDLGMVSNENNADKIKDMLKIARDLTDNPISVDTLNTKELIEAINLGADMILSVDAGNLDELIPYLKDSETAVVVLPTNYKTNYVPETIEGKIKSLEENIKKLIDAGIEKIVADPILEPINNAGCSFIESVIACREFKKRNKLPLFFGVGNVTELFDADSNGVNALLAAIGAEIGANILFTPEASAKCKFSIKELKIASKMMFLAKKRNSLPKDIGYNLINYKDKRFEEEITFNSYNIPIIKAEEDERQILDEGSFKIEIDRKNKEIVAIYFNKRREPVLIIRGKKPKEIYETAIRLNLIKKLDHASYFGRELAKAEIALRIGKKYNQDFDLFL.

2 consecutive transmembrane segments (helical) span residues 28–48 (FIDVHVANISVAAFLTPNLII) and 353–373 (GVNALLAAIGAEIGANILFTP). In terms of domain architecture, Pterin-binding spans 146-394 (DIKIGKLKVG…ELKIASKMMF (249 aa)).

The protein localises to the cell membrane. Unknown. Does not possess dihydropteroate synthase (DHPS) activity since it does not catalyze the condensation of 6-hydroxymethyl-7,8-dihydropterin pyrophosphate (DHPP) and 4-aminobenzoate to form 7,8-dihydropteroate. This is an uncharacterized protein from Methanocaldococcus jannaschii (strain ATCC 43067 / DSM 2661 / JAL-1 / JCM 10045 / NBRC 100440) (Methanococcus jannaschii).